The primary structure comprises 141 residues: Hemoglobin subunit alpha (141 aa).

Residues 1–141 (VLSPADKTNV…VSTVLTSKYR (141 aa)) form the Globin domain. Residue serine 3 is modified to Phosphoserine. Residue lysine 7 is modified to N6-succinyllysine. Threonine 8 carries the phosphothreonine modification. Position 11 is an N6-succinyllysine (lysine 11). Lysine 16 carries the post-translational modification N6-acetyllysine; alternate. Lysine 16 is modified (N6-succinyllysine; alternate). At tyrosine 24 the chain carries Phosphotyrosine. Serine 35 is subject to Phosphoserine. N6-succinyllysine is present on lysine 40. Serine 49 carries the post-translational modification Phosphoserine. Histidine 58 is an O2 binding site. Residue histidine 87 coordinates heme b. Serine 102 is modified (phosphoserine). A Phosphothreonine modification is found at threonine 108. Phosphoserine occurs at positions 124 and 131. A phosphothreonine mark is found at threonine 134 and threonine 137. Serine 138 bears the Phosphoserine mark.

The protein belongs to the globin family. As to quaternary structure, heterotetramer of two alpha chains and two beta chains. Red blood cells.

Its function is as follows. Involved in oxygen transport from the lung to the various peripheral tissues. Functionally, hemopressin acts as an antagonist peptide of the cannabinoid receptor CNR1. Hemopressin-binding efficiently blocks cannabinoid receptor CNR1 and subsequent signaling. The sequence is that of Hemoglobin subunit alpha (HBA) from Semnopithecus entellus (Northern plains gray langur).